The following is a 436-amino-acid chain: UPF0597 protein YhaM (436 aa).

This sequence belongs to the UPF0597 family.

The polypeptide is UPF0597 protein YhaM (Shigella boydii serotype 18 (strain CDC 3083-94 / BS512)).